A 425-amino-acid polypeptide reads, in one-letter code: Elongation factor 1-alpha (425 aa).

The tr-type G domain maps to Lys-5 to Thr-221. Positions Gly-14–Ser-21 are G1. Gly-14–Ser-21 contacts GTP. Ser-21 lines the Mg(2+) pocket. Positions Gly-70–Asp-74 are G2. The segment at Asp-91 to Gly-94 is G3. GTP-binding positions include Asp-91–His-95 and Asn-146–Asp-149. The interval Asn-146–Asp-149 is G4. Positions Ser-185–Phe-187 are G5.

It belongs to the TRAFAC class translation factor GTPase superfamily. Classic translation factor GTPase family. EF-Tu/EF-1A subfamily.

Its subcellular location is the cytoplasm. It carries out the reaction GTP + H2O = GDP + phosphate + H(+). Its function is as follows. GTP hydrolase that promotes the GTP-dependent binding of aminoacyl-tRNA to the A-site of ribosomes during protein biosynthesis. This chain is Elongation factor 1-alpha, found in Methanoculleus marisnigri (strain ATCC 35101 / DSM 1498 / JR1).